We begin with the raw amino-acid sequence, 363 residues long: Transcription factor PIF6 (363 aa).

Disordered regions lie at residues 154-204 (SEGS…RNDI) and 340-363 (IPNPNSLSNLDGATLHKKSRKTNR). Positions 178–188 (RTRKALVKRKR) are enriched in basic residues. The 50-residue stretch at 188–237 (RNAEAYNSPERNQRNDINKKMRTLQNLLPNSHKDDNESMLDEAINYMTNL) folds into the bHLH domain. The span at 340–350 (IPNPNSLSNLD) shows a compositional bias: polar residues. The segment covering 354 to 363 (LHKKSRKTNR) has biased composition (basic residues).

Homodimer. Interacts with APRR1/TOC1. Binds to RGL2 and RGA. Associates to PTAC12/HMR/PAP5 which acts as a transcriptional coactivator. As to expression, mainly expressed in fruits and flowers and, to a lower extent, in leaves, stems, seedlings and roots.

It localises to the nucleus. In terms of biological role, transcription factor. This chain is Transcription factor PIF6, found in Arabidopsis thaliana (Mouse-ear cress).